The primary structure comprises 184 residues: Lipoprotein signal peptidase (184 aa).

3 helical membrane-spanning segments follow: residues 23–43 (FLYY…FQVF), 88–108 (PGLV…FLVF), and 110–130 (TSYN…GNFF). Catalysis depends on residues Asp142 and Asp157. Residues 156 to 176 (ADCCITFSFIGLFLSFLIQFF) traverse the membrane as a helical segment.

The protein belongs to the peptidase A8 family.

It is found in the cell membrane. The catalysed reaction is Release of signal peptides from bacterial membrane prolipoproteins. Hydrolyzes -Xaa-Yaa-Zaa-|-(S,diacylglyceryl)Cys-, in which Xaa is hydrophobic (preferably Leu), and Yaa (Ala or Ser) and Zaa (Gly or Ala) have small, neutral side chains.. It participates in protein modification; lipoprotein biosynthesis (signal peptide cleavage). Functionally, this protein specifically catalyzes the removal of signal peptides from prolipoproteins. In Mycoplasma pneumoniae (strain ATCC 29342 / M129 / Subtype 1) (Mycoplasmoides pneumoniae), this protein is Lipoprotein signal peptidase.